The primary structure comprises 422 residues: UPF0761 membrane protein LHK_02978 (422 aa).

6 helical membrane-spanning segments follow: residues 44-64, 102-122, 141-161, 178-198, 212-232, and 246-266; these read LLSL…FPVF, LTAV…LTID, MLVY…GISG, LAGI…LTVL, ALIG…GFGL, and AFAT…TVLI.

This sequence belongs to the UPF0761 family.

It is found in the cell inner membrane. This chain is UPF0761 membrane protein LHK_02978, found in Laribacter hongkongensis (strain HLHK9).